We begin with the raw amino-acid sequence, 122 residues long: UPF0102 protein MUL_2060 (122 aa).

It belongs to the UPF0102 family.

The protein is UPF0102 protein MUL_2060 of Mycobacterium ulcerans (strain Agy99).